Reading from the N-terminus, the 375-residue chain is Glycogen synthase kinase-3 homolog YGK3 (375 aa).

The Protein kinase domain maps to 41–329 (VREGKRIGHG…ARQLMAHEFF (289 aa)). Residues 47-55 (IGHGSFGTV) and lysine 74 each bind ATP. Aspartate 173 acts as the Proton acceptor in catalysis. Serine 211 carries the post-translational modification Phosphoserine.

This sequence belongs to the protein kinase superfamily. Ser/Thr protein kinase family.

It carries out the reaction L-seryl-[protein] + ATP = O-phospho-L-seryl-[protein] + ADP + H(+). The enzyme catalyses L-threonyl-[protein] + ATP = O-phospho-L-threonyl-[protein] + ADP + H(+). Required for heat stress-instigated phosphorylation of BCY1 which is involved in cell wall integrity signaling. Regulates activity of MSN2, a transcription factor that binds to the stress-response element (STRE). Probably promotes formation of a complex between MSN2 and DNA. Regulates the stability of ROG1. The sequence is that of Glycogen synthase kinase-3 homolog YGK3 (YGK3) from Saccharomyces cerevisiae (strain ATCC 204508 / S288c) (Baker's yeast).